The chain runs to 332 residues: 3'(2'),5'-bisphosphate nucleotidase (332 aa).

Aspartate 49 acts as the Proton acceptor in catalysis. Mg(2+) is bound by residues glutamate 73, aspartate 129, isoleucine 131, and aspartate 132. Threonine 134 serves as the catalytic Proton acceptor. 5 residues coordinate adenosine 3',5'-bisphosphate: threonine 134, serine 245, lysine 248, arginine 262, and aspartate 274. The AMP site is built by serine 245, lysine 248, arginine 262, and aspartate 274. Aspartate 274 contacts Mg(2+).

It belongs to the inositol monophosphatase superfamily. It depends on Mg(2+) as a cofactor.

It carries out the reaction 3'-phosphoadenylyl sulfate + H2O = adenosine 5'-phosphosulfate + phosphate. The catalysed reaction is adenosine 3',5'-bisphosphate + H2O = AMP + phosphate. It catalyses the reaction adenosine 2',5'-bisphosphate + H2O = AMP + phosphate. The enzyme catalyses 1D-myo-inositol 1,4-bisphosphate + H2O = 1D-myo-inositol 4-phosphate + phosphate. It carries out the reaction 1D-myo-inositol 1,3,4-trisphosphate + H2O = 1D-myo-inositol 3,4-bisphosphate + phosphate. Phosphatase that converts adenosine 3'-phosphate 5'-phosphosulfate (PAPS) to adenosine 5'-phosphosulfate (APS) and 3'(2')-phosphoadenosine 5'-phosphate (PAP) to AMP. Is also able to hydrolyze inositol 1,4-bisphosphate and inositol 1,3,4-trisphosphate. This chain is 3'(2'),5'-bisphosphate nucleotidase, found in Dictyostelium discoideum (Social amoeba).